The sequence spans 469 residues: Putative dipeptidase SE_1424 (469 aa).

Residue His-84 participates in Zn(2+) binding. Asp-86 is a catalytic residue. A Zn(2+)-binding site is contributed by Asp-115. Glu-149 (proton acceptor) is an active-site residue. 3 residues coordinate Zn(2+): Glu-150, Asp-173, and His-440.

This sequence belongs to the peptidase M20A family. Requires Zn(2+) as cofactor.

In Staphylococcus epidermidis (strain ATCC 12228 / FDA PCI 1200), this protein is Putative dipeptidase SE_1424.